Reading from the N-terminus, the 516-residue chain is Endoglucanase 20 (516 aa).

The signal sequence occupies residues 1-23 (MAAGMVATMVLLTCLAAGGLVVG). An N-linked (GlcNAc...) asparagine glycan is attached at asparagine 83. The Nucleophile role is filled by aspartate 93. Active-site residues include histidine 416, aspartate 468, and glutamate 477.

It belongs to the glycosyl hydrolase 9 (cellulase E) family.

Its subcellular location is the secreted. The enzyme catalyses Endohydrolysis of (1-&gt;4)-beta-D-glucosidic linkages in cellulose, lichenin and cereal beta-D-glucans.. This Oryza sativa subsp. japonica (Rice) protein is Endoglucanase 20 (GLU15).